A 271-amino-acid chain; its full sequence is 3-methyl-2-oxobutanoate hydroxymethyltransferase (271 aa).

The Mg(2+) site is built by Asp-53 and Asp-92. 3-methyl-2-oxobutanoate contacts are provided by residues 53 to 54 (DS), Asp-92, and Lys-120. Residue Glu-122 coordinates Mg(2+). The active-site Proton acceptor is the Glu-189.

The protein belongs to the PanB family. Homodecamer; pentamer of dimers. The cofactor is Mg(2+).

It localises to the cytoplasm. It carries out the reaction 3-methyl-2-oxobutanoate + (6R)-5,10-methylene-5,6,7,8-tetrahydrofolate + H2O = 2-dehydropantoate + (6S)-5,6,7,8-tetrahydrofolate. Its pathway is cofactor biosynthesis; (R)-pantothenate biosynthesis; (R)-pantoate from 3-methyl-2-oxobutanoate: step 1/2. In terms of biological role, catalyzes the reversible reaction in which hydroxymethyl group from 5,10-methylenetetrahydrofolate is transferred onto alpha-ketoisovalerate to form ketopantoate. In Burkholderia mallei (strain NCTC 10247), this protein is 3-methyl-2-oxobutanoate hydroxymethyltransferase.